A 219-amino-acid chain; its full sequence is Histone H1.4 (219 aa).

The segment covering Met-1–Ala-15 has biased composition (low complexity). A disordered region spans residues Met-1 to Ser-41. Residue Ser-2 is modified to N-acetylserine. At Ser-2 the chain carries Phosphoserine. Lys-17 carries the N6-acetyllysine modification. Thr-18 bears the Phosphothreonine mark. A compositionally biased stretch (basic residues) spans Val-20–Thr-35. Lys-26 bears the N6-acetyllysine; alternate mark. Lys-26 is modified (N6-methyllysine; alternate). The residue at position 34 (Lys-34) is an N6-(beta-hydroxybutyryl)lysine; alternate. Lys-34 carries the post-translational modification N6-succinyllysine; alternate. Residue Ser-36 is modified to Phosphoserine. The H15 domain occupies Ser-36 to Lys-109. Residue Lys-52 is modified to N6-(beta-hydroxybutyryl)lysine. Residue Arg-54 is modified to Citrulline. An N6-(beta-hydroxybutyryl)lysine mark is found at Lys-64, Lys-85, Lys-90, and Lys-106. Residues Thr-92–Lys-219 form a disordered region. Residues Lys-119–Lys-140 are compositionally biased toward basic residues. Thr-146 is modified (phosphothreonine). Basic residues-rich tracts occupy residues Lys-149 to Lys-160 and Lys-168 to Pro-185. ADP-ribosylserine is present on Ser-150. Ser-187 carries the phosphoserine modification. A compositionally biased stretch (basic residues) spans Lys-192 to Lys-219.

This sequence belongs to the histone H1/H5 family. In terms of processing, citrullination at Arg-54 (H1R54ci) by PADI4 takes place within the DNA-binding site of H1 and results in its displacement from chromatin and global chromatin decondensation, thereby promoting pluripotency and stem cell maintenance. Post-translationally, ADP-ribosylated on Ser-55, Ser-113 and Ser-150 in response to DNA damage. H1 histones are progressively phosphorylated during the cell cycle, becoming maximally phosphorylated during late G2 phase and M phase, and being dephosphorylated sharply thereafter. In terms of processing, acetylated at Lys-26. Deacetylated at Lys-26 by SIRT1. Post-translationally, hydroxybutyrylation of histones is induced by starvation.

It localises to the nucleus. The protein localises to the chromosome. In terms of biological role, histone H1 protein binds to linker DNA between nucleosomes forming the macromolecular structure known as the chromatin fiber. Histones H1 are necessary for the condensation of nucleosome chains into higher-order structured fibers. Also acts as a regulator of individual gene transcription through chromatin remodeling, nucleosome spacing and DNA methylation. The chain is Histone H1.4 from Mus musculus (Mouse).